Reading from the N-terminus, the 611-residue chain is RAC serine/threonine-protein kinase (611 aa).

Positions 14-25 (VVASAPAPGSAS) are enriched in low complexity. Disordered stretches follow at residues 14-33 (VVASAPAPGSASRIPESPTT) and 45-88 (QSTH…NTTF). Residue Ser-30 is modified to Phosphoserine. A PH domain is found at 106 to 211 (QVVKEGWLMK…WTEAIRNVSS (106 aa)). Residues 266 to 523 (FEFLKVLGKG…VKEIQAHPFF (258 aa)) form the Protein kinase domain. ATP contacts are provided by residues 272-280 (LGKGTFGKV) and Lys-295. Asp-389 serves as the catalytic Proton acceptor. The region spanning 524 to 597 (ASINWTDLVL…QGDMASTLGT (74 aa)) is the AGC-kinase C-terminal domain. A Phosphoserine modification is found at Ser-586.

Belongs to the protein kinase superfamily. AGC Ser/Thr protein kinase family. RAC subfamily. As to quaternary structure, interacts with trbl. In terms of processing, phosphorylated and activated by Pk61C/PDK1. Phosphorylated on Ser-586 by the TORC2 complex. Ubiquitously expressed. Present in ovary, where it is concentrated at the basal side of follicle cells.

The protein localises to the cytoplasm. It is found in the cytosol. It localises to the cell membrane. It carries out the reaction L-seryl-[protein] + ATP = O-phospho-L-seryl-[protein] + ADP + H(+). The catalysed reaction is L-threonyl-[protein] + ATP = O-phospho-L-threonyl-[protein] + ADP + H(+). In terms of biological role, serine/threonine kinase involved in various developmental processes. During early embryogenesis, acts as a survival protein. During mid-embryogenesis, phosphorylates and activates trh, a transcription factor required for tracheal cell fate determination. Also regulates tracheal cell migration. Later in development, acts downstream of PI3K and Pk61C/PDK1 in the insulin receptor transduction pathway which regulates cell growth and organ size, by phosphorylating and antagonizing FOXO transcription factor. Controls follicle cell size during oogenesis. May also stimulate cell growth by phosphorylating Gig/Tsc2 and inactivating the Tsc complex. Dephosphorylation of 'Ser-586' by Phlpp triggers apoptosis and suppression of tumor growth. This is RAC serine/threonine-protein kinase from Drosophila melanogaster (Fruit fly).